Here is a 491-residue protein sequence, read N- to C-terminus: Probable CtpA-like serine protease (491 aa).

A disordered region spans residues 1-22 (MNDHQKNHATSQDDNTKSTPSK). Residues 8–22 (HATSQDDNTKSTPSK) show a composition bias toward polar residues. A helical membrane pass occupies residues 31 to 51 (LWHFILVILGIILLTSIITVV). One can recognise a PDZ domain in the interval 119-201 (TKQFNEGVSG…TYVTLTIKRG (83 aa)). Catalysis depends on charge relay system residues Ser324, Asp335, and Lys349.

The protein belongs to the peptidase S41A family.

It localises to the cell membrane. The polypeptide is Probable CtpA-like serine protease (Staphylococcus epidermidis (strain ATCC 12228 / FDA PCI 1200)).